Consider the following 256-residue polypeptide: MSEKRVEKKLIHYVKKALNDYRMINTGDRVMVCLSGGKDSYTLLSLLNSIRIEGNYKFDIFAFVLDQSQPGWDDSALRGWLDDKKIPYEILTRDTYSIVKEKIPAGKTYCSLCSRLRRGIIYRYAEEQGFSKIALGHHRDDLIQTLLMSVFYNGQIRSMPPKLLSDNKRHVLIRPLAYCQERDIIKYAMEQQFPLIPCNLCDSQKNLMRQRVKRLISDLAKENPKVPSNMLRALSNIKPSQLMDHELWNFRELNVD.

The PP-loop motif motif lies at 35 to 40; the sequence is SGGKDS. [4Fe-4S] cluster is bound by residues C110, C113, and C201.

Belongs to the TtcA family. Homodimer. Mg(2+) is required as a cofactor. It depends on [4Fe-4S] cluster as a cofactor.

The protein localises to the cytoplasm. It carries out the reaction cytidine(32) in tRNA + S-sulfanyl-L-cysteinyl-[cysteine desulfurase] + AH2 + ATP = 2-thiocytidine(32) in tRNA + L-cysteinyl-[cysteine desulfurase] + A + AMP + diphosphate + H(+). Its pathway is tRNA modification. Its function is as follows. Catalyzes the ATP-dependent 2-thiolation of cytidine in position 32 of tRNA, to form 2-thiocytidine (s(2)C32). The sulfur atoms are provided by the cysteine/cysteine desulfurase (IscS) system. This Coxiella burnetii (strain RSA 493 / Nine Mile phase I) protein is tRNA-cytidine(32) 2-sulfurtransferase.